Reading from the N-terminus, the 731-residue chain is 1,4-alpha-glucan branching enzyme GlgB (731 aa).

Residue Asp412 is the Nucleophile of the active site. Glu465 serves as the catalytic Proton donor.

The protein belongs to the glycosyl hydrolase 13 family. GlgB subfamily. As to quaternary structure, monomer.

It carries out the reaction Transfers a segment of a (1-&gt;4)-alpha-D-glucan chain to a primary hydroxy group in a similar glucan chain.. Its pathway is glycan biosynthesis; glycogen biosynthesis. Its function is as follows. Catalyzes the formation of the alpha-1,6-glucosidic linkages in glycogen by scission of a 1,4-alpha-linked oligosaccharide from growing alpha-1,4-glucan chains and the subsequent attachment of the oligosaccharide to the alpha-1,6 position. The protein is 1,4-alpha-glucan branching enzyme GlgB of Bordetella bronchiseptica (strain ATCC BAA-588 / NCTC 13252 / RB50) (Alcaligenes bronchisepticus).